The chain runs to 370 residues: 1-propanol dehydrogenase PduQ (370 aa).

The protein belongs to the iron-containing alcohol dehydrogenase family. Interacts with PduP, probably via the N-terminus of PduQ. Fe cation serves as cofactor.

It localises to the bacterial microcompartment. The enzyme catalyses 1-propanol + NAD(+) = propanal + NADH + H(+). Its pathway is polyol metabolism; 1,2-propanediol degradation. Its function is as follows. An iron-dependent alcohol dehydrogenase required for optimal 1,2-propanediol (1,2-PD) degradation. NAD(+) and NADH are regenerated internally within the bacterial microcompartment (BMC) dedicated to 1,2-PD degradation by the PduP and PduQ enzymes, which reduce NAD(+) and oxidize NADH respectively, although there must also be cofactor transport across the BMC. In terms of biological role, expression of a cosmid containing the full 21-gene pdu operon in E.coli allows E.coli to grow on 1,2-propanediol (1,2-PD) with the appearance of bacterial microcompartments (BMC) in its cytoplasm. Functionally, the 1,2-PD-specific bacterial microcompartment (BMC) concentrates low levels of 1,2-PD catabolic enzymes, concentrates volatile reaction intermediates thus enhancing pathway flux and keeps the level of toxic, mutagenic propionaldehyde low. The sequence is that of 1-propanol dehydrogenase PduQ from Citrobacter freundii.